Consider the following 254-residue polypeptide: Proline-rich protein 23A3 (254 aa).

3 disordered regions span residues 1-50 (MLRT…LEAP), 161-196 (ASPP…GAEQ), and 212-254 (PFPG…LVYE). Positions 35–50 (EPACPEPLAQPELEAP) are enriched in low complexity. Over residues 214–241 (PGSPLQPLPPSPSRNPQEQLPPCPPCSP) the composition is skewed to pro residues. A compositionally biased stretch (basic residues) spans 243–254 (APRRARKRLVYE).

This sequence belongs to the PRR23 family.

In Mus musculus (Mouse), this protein is Proline-rich protein 23A3.